We begin with the raw amino-acid sequence, 149 residues long: Down syndrome critical region protein 9 (149 aa).

Residues 1 to 41 are disordered; that stretch reads MGRICPVNSRARRLRARPGRPSGDSLPYHQLQGGAPRLWSP.

Testis specific.

The chain is Down syndrome critical region protein 9 (DSCR9) from Homo sapiens (Human).